We begin with the raw amino-acid sequence, 493 residues long: Proline--tRNA ligase (493 aa).

Belongs to the class-II aminoacyl-tRNA synthetase family. ProS type 3 subfamily. As to quaternary structure, homodimer.

Its subcellular location is the cytoplasm. The enzyme catalyses tRNA(Pro) + L-proline + ATP = L-prolyl-tRNA(Pro) + AMP + diphosphate. In terms of biological role, catalyzes the attachment of proline to tRNA(Pro) in a two-step reaction: proline is first activated by ATP to form Pro-AMP and then transferred to the acceptor end of tRNA(Pro). In Porphyromonas gingivalis (strain ATCC 33277 / DSM 20709 / CIP 103683 / JCM 12257 / NCTC 11834 / 2561), this protein is Proline--tRNA ligase.